The following is a 446-amino-acid chain: DNA repair protein RadA (446 aa).

A C4-type zinc finger spans residues 10–27; the sequence is CSNCGNTSPKWSGQCFDC. 91–98 is an ATP binding site; the sequence is GDPGIGKS. A RadA KNRFG motif motif is present at residues 250–254; that stretch reads KNRFG. The lon-protease-like stretch occupies residues 349–446; the sequence is EVYLSIAGGL…HLKDLKEIIR (98 aa).

Belongs to the RecA family. RadA subfamily.

Its function is as follows. DNA-dependent ATPase involved in processing of recombination intermediates, plays a role in repairing DNA breaks. Stimulates the branch migration of RecA-mediated strand transfer reactions, allowing the 3' invading strand to extend heteroduplex DNA faster. Binds ssDNA in the presence of ADP but not other nucleotides, has ATPase activity that is stimulated by ssDNA and various branched DNA structures, but inhibited by SSB. Does not have RecA's homology-searching function. The polypeptide is DNA repair protein RadA (Rickettsia felis (strain ATCC VR-1525 / URRWXCal2) (Rickettsia azadi)).